The primary structure comprises 259 residues: tRNA pseudouridine synthase A (259 aa).

D50 serves as the catalytic Nucleophile. A substrate-binding site is contributed by Y101.

It belongs to the tRNA pseudouridine synthase TruA family.

The enzyme catalyses uridine(38/39/40) in tRNA = pseudouridine(38/39/40) in tRNA. Formation of pseudouridine at positions 38, 39 and 40 in the anticodon stem and loop of transfer RNAs. The polypeptide is tRNA pseudouridine synthase A (Methanocaldococcus jannaschii (strain ATCC 43067 / DSM 2661 / JAL-1 / JCM 10045 / NBRC 100440) (Methanococcus jannaschii)).